Consider the following 818-residue polypeptide: Cation/H(+) antiporter 6A (818 aa).

13 consecutive transmembrane segments (helical) span residues 51–71 (NFWE…FFIW), 88–110 (FTYM…KSWI), 123–143 (VAET…GVTM), 156–176 (SVIG…TFRY), 192–212 (LIIF…LKDL), 222–242 (IALS…FFNA), 248–268 (LYGF…ICVV), 288–308 (FYLY…NKVI), 310–330 (LFGP…YPLG), 340–360 (FNLG…VDLL), 376–396 (IYEV…VTTI), 409–429 (FALA…YTYA), and 438–458 (EVFT…PMLL).

This sequence belongs to the monovalent cation:proton antiporter 2 (CPA2) transporter (TC 2.A.37) family. CHX (TC 2.A.37.4) subfamily. Preferentially expressed in pollen.

The protein resides in the membrane. May operate as a cation/H(+) antiporter. This chain is Cation/H(+) antiporter 6A (CHX6a), found in Arabidopsis thaliana (Mouse-ear cress).